A 417-amino-acid chain; its full sequence is Gamma-glutamyl phosphate reductase (417 aa).

The protein belongs to the gamma-glutamyl phosphate reductase family.

The protein resides in the cytoplasm. It carries out the reaction L-glutamate 5-semialdehyde + phosphate + NADP(+) = L-glutamyl 5-phosphate + NADPH + H(+). It functions in the pathway amino-acid biosynthesis; L-proline biosynthesis; L-glutamate 5-semialdehyde from L-glutamate: step 2/2. In terms of biological role, catalyzes the NADPH-dependent reduction of L-glutamate 5-phosphate into L-glutamate 5-semialdehyde and phosphate. The product spontaneously undergoes cyclization to form 1-pyrroline-5-carboxylate. The chain is Gamma-glutamyl phosphate reductase from Escherichia coli (strain SMS-3-5 / SECEC).